A 324-amino-acid polypeptide reads, in one-letter code: Archaeosine synthase subunit beta (324 aa).

Residues 12 to 254 (GKPGTALFII…LIWAKRKFPN (243 aa)) enclose the Radical SAM core domain. The [4Fe-4S] cluster site is built by Cys-27, Cys-36, and Cys-39.

It belongs to the radical SAM superfamily. RaSEA family. Forms a robust complex with the archaeosine synthase alpha subunit ArcS, likely an alpha(2)beta(2) heterotetrameric structure. The cofactor is [4Fe-4S] cluster.

The catalysed reaction is 7-N-[(5S)-5-amino-5-carboxypentyl]formamidino-7-deazaguanosine(15) in tRNA + S-adenosyl-L-methionine = archaeosine(15) in tRNA + L-1-piperideine-6-carboxylate + 5'-deoxyadenosine + L-methionine + 2 H(+). It participates in tRNA modification; archaeosine-tRNA biosynthesis. In terms of biological role, radical SAM enzyme involved in the synthesis of archaeosine, a modified nucleoside present in the dihydrouridine loop (D-loop) of archaeal tRNAs. Catalyzes the cleavage of the C(epsilon)-N bond of the lysine moiety of q0kN15-tRNA, leading to the formation of archaeosine at position 15 in tRNAs. This Thermococcus kodakarensis (strain ATCC BAA-918 / JCM 12380 / KOD1) (Pyrococcus kodakaraensis (strain KOD1)) protein is Archaeosine synthase subunit beta.